We begin with the raw amino-acid sequence, 429 residues long: Ribosomal RNA small subunit methyltransferase B (429 aa).

Residues 254 to 260, Asp-277, Asp-303, and Asp-322 each bind S-adenosyl-L-methionine; that span reads CAAPGGK. The active-site Nucleophile is the Cys-375. Residues 397–419 are disordered; it reads ALSETGTPDQPGQQNLPGGEEGD. The segment covering 400–412 has biased composition (polar residues); it reads ETGTPDQPGQQNL.

Belongs to the class I-like SAM-binding methyltransferase superfamily. RsmB/NOP family.

Its subcellular location is the cytoplasm. The enzyme catalyses cytidine(967) in 16S rRNA + S-adenosyl-L-methionine = 5-methylcytidine(967) in 16S rRNA + S-adenosyl-L-homocysteine + H(+). Its function is as follows. Specifically methylates the cytosine at position 967 (m5C967) of 16S rRNA. The polypeptide is Ribosomal RNA small subunit methyltransferase B (Salmonella typhi).